The chain runs to 345 residues: S-adenosylmethionine:tRNA ribosyltransferase-isomerase (345 aa).

It belongs to the QueA family. Monomer.

The protein localises to the cytoplasm. The catalysed reaction is 7-aminomethyl-7-carbaguanosine(34) in tRNA + S-adenosyl-L-methionine = epoxyqueuosine(34) in tRNA + adenine + L-methionine + 2 H(+). The protein operates within tRNA modification; tRNA-queuosine biosynthesis. Its function is as follows. Transfers and isomerizes the ribose moiety from AdoMet to the 7-aminomethyl group of 7-deazaguanine (preQ1-tRNA) to give epoxyqueuosine (oQ-tRNA). The polypeptide is S-adenosylmethionine:tRNA ribosyltransferase-isomerase (Shewanella baltica (strain OS185)).